We begin with the raw amino-acid sequence, 97 residues long: YcgL domain-containing protein PA14_47450 (97 aa).

Residues 3–87 enclose the YcgL domain; the sequence is RICSVYKSPR…GEEEYIEHLP (85 aa).

The sequence is that of YcgL domain-containing protein PA14_47450 from Pseudomonas aeruginosa (strain UCBPP-PA14).